Reading from the N-terminus, the 483-residue chain is Iroquois-class homeodomain protein IRX-5 (483 aa).

The homeobox; TALE-type DNA-binding region spans 113–175 (DPAYRKNATR…NARRRLKKEN (63 aa)). Disordered stretches follow at residues 177–392 (MTWT…QCPF) and 423–442 (GHPGPGPGPTTGPGSHFNGL). The span at 186-203 (EDEEEEENIDLEKNDEDE) shows a compositional bias: acidic residues. Basic and acidic residues-rich tracts occupy residues 204-213 (PQKPEDKGDP) and 250-261 (SDFKEPPSEGRL). Composition is skewed to low complexity over residues 266–282 (GPPRTGGPSPAGPAAAR) and 374–388 (SRASPAPAPSRSPSA). Position 274 is a phosphoserine (Ser-274). Ser-464 carries the phosphoserine modification.

It belongs to the TALE/IRO homeobox family.

It localises to the nucleus. Functionally, establishes the cardiac repolarization gradient by its repressive actions on the KCND2 potassium-channel gene. Required for retinal cone bipolar cell differentiation. May regulate contrast adaptation in the retina and control specific aspects of visual function in circuits of the mammalian retina. Could be involved in the regulation of both the cell cycle and apoptosis in prostate cancer cells. Involved in craniofacial and gonadal development. Modulates the migration of progenitor cell populations in branchial arches and gonads by repressing CXCL12. The chain is Iroquois-class homeodomain protein IRX-5 (IRX5) from Homo sapiens (Human).